Reading from the N-terminus, the 404-residue chain is Putative aspartate aminotransferase, cytoplasmic 2 (404 aa).

Lys249 is subject to N6-(pyridoxal phosphate)lysine.

The protein belongs to the class-I pyridoxal-phosphate-dependent aminotransferase family. As to quaternary structure, homodimer. Pyridoxal 5'-phosphate is required as a cofactor.

It is found in the cytoplasm. It carries out the reaction L-aspartate + 2-oxoglutarate = oxaloacetate + L-glutamate. This Mus musculus (Mouse) protein is Putative aspartate aminotransferase, cytoplasmic 2 (Got1l1).